Here is a 295-residue protein sequence, read N- to C-terminus: Acetylglutamate kinase (295 aa).

Residues 61–62, Arg-83, and Asn-182 each bind substrate; that span reads GG.

It belongs to the acetylglutamate kinase family. ArgB subfamily.

It is found in the cytoplasm. It carries out the reaction N-acetyl-L-glutamate + ATP = N-acetyl-L-glutamyl 5-phosphate + ADP. It participates in amino-acid biosynthesis; L-arginine biosynthesis; N(2)-acetyl-L-ornithine from L-glutamate: step 2/4. In terms of biological role, catalyzes the ATP-dependent phosphorylation of N-acetyl-L-glutamate. The protein is Acetylglutamate kinase of Clostridium acetobutylicum (strain ATCC 824 / DSM 792 / JCM 1419 / IAM 19013 / LMG 5710 / NBRC 13948 / NRRL B-527 / VKM B-1787 / 2291 / W).